Consider the following 684-residue polypeptide: Probable phosphoenolpyruvate synthase (684 aa).

Catalysis depends on His424, which acts as the Tele-phosphohistidine intermediate. Residues Arg517, Arg564, and Glu661 each coordinate substrate. Glu661 serves as a coordination point for Mg(2+).

It belongs to the PEP-utilizing enzyme family. Mg(2+) serves as cofactor.

The enzyme catalyses pyruvate + ATP + H2O = phosphoenolpyruvate + AMP + phosphate + 2 H(+). It participates in carbohydrate biosynthesis; gluconeogenesis. Functionally, catalyzes the phosphorylation of pyruvate to phosphoenolpyruvate. The sequence is that of Probable phosphoenolpyruvate synthase (ppsA) from Methanothermobacter thermautotrophicus (strain ATCC 29096 / DSM 1053 / JCM 10044 / NBRC 100330 / Delta H) (Methanobacterium thermoautotrophicum).